A 399-amino-acid polypeptide reads, in one-letter code: Imidazolonepropionase (399 aa).

Fe(3+) is bound by residues His74 and His76. Positions 74 and 76 each coordinate Zn(2+). Arg83, Tyr146, and His176 together coordinate 4-imidazolone-5-propanoate. Tyr146 provides a ligand contact to N-formimidoyl-L-glutamate. His238 lines the Fe(3+) pocket. His238 is a binding site for Zn(2+). Gln241 serves as a coordination point for 4-imidazolone-5-propanoate. Asp312 is a Fe(3+) binding site. Residue Asp312 coordinates Zn(2+). N-formimidoyl-L-glutamate is bound by residues Asn314 and Gly316. Ser317 serves as a coordination point for 4-imidazolone-5-propanoate.

It belongs to the metallo-dependent hydrolases superfamily. HutI family. Zn(2+) serves as cofactor. Fe(3+) is required as a cofactor.

The protein localises to the cytoplasm. The enzyme catalyses 4-imidazolone-5-propanoate + H2O = N-formimidoyl-L-glutamate. The protein operates within amino-acid degradation; L-histidine degradation into L-glutamate; N-formimidoyl-L-glutamate from L-histidine: step 3/3. Functionally, catalyzes the hydrolytic cleavage of the carbon-nitrogen bond in imidazolone-5-propanoate to yield N-formimidoyl-L-glutamate. It is the third step in the universal histidine degradation pathway. The sequence is that of Imidazolonepropionase from Deinococcus deserti (strain DSM 17065 / CIP 109153 / LMG 22923 / VCD115).